A 375-amino-acid chain; its full sequence is Succinyl-diaminopimelate desuccinylase (375 aa).

Histidine 66 is a Zn(2+) binding site. Aspartate 68 is an active-site residue. Aspartate 99 is a binding site for Zn(2+). Glutamate 133 serves as the catalytic Proton acceptor. 3 residues coordinate Zn(2+): glutamate 134, glutamate 162, and histidine 348.

It belongs to the peptidase M20A family. DapE subfamily. Homodimer. It depends on Zn(2+) as a cofactor. Co(2+) serves as cofactor.

It carries out the reaction N-succinyl-(2S,6S)-2,6-diaminopimelate + H2O = (2S,6S)-2,6-diaminopimelate + succinate. It functions in the pathway amino-acid biosynthesis; L-lysine biosynthesis via DAP pathway; LL-2,6-diaminopimelate from (S)-tetrahydrodipicolinate (succinylase route): step 3/3. In terms of biological role, catalyzes the hydrolysis of N-succinyl-L,L-diaminopimelic acid (SDAP), forming succinate and LL-2,6-diaminopimelate (DAP), an intermediate involved in the bacterial biosynthesis of lysine and meso-diaminopimelic acid, an essential component of bacterial cell walls. The sequence is that of Succinyl-diaminopimelate desuccinylase from Salmonella dublin (strain CT_02021853).